Here is an 88-residue protein sequence, read N- to C-terminus: Small ribosomal subunit protein uS15 (88 aa).

The protein belongs to the universal ribosomal protein uS15 family. In terms of assembly, part of the 30S ribosomal subunit. Forms a bridge to the 50S subunit in the 70S ribosome, contacting the 23S rRNA.

One of the primary rRNA binding proteins, it binds directly to 16S rRNA where it helps nucleate assembly of the platform of the 30S subunit by binding and bridging several RNA helices of the 16S rRNA. Functionally, forms an intersubunit bridge (bridge B4) with the 23S rRNA of the 50S subunit in the ribosome. The sequence is that of Small ribosomal subunit protein uS15 from Polaromonas naphthalenivorans (strain CJ2).